We begin with the raw amino-acid sequence, 976 residues long: Chloride channel protein 1 (976 aa).

Residues 1–118 (MQPSQSLRRG…VVRRKLGEDW (118 aa)) are Cytoplasmic-facing. Positions 71–92 (DKEQDTGMSKKMGSSESMDSKD) are disordered. Over residues 77-87 (GMSKKMGSSES) the composition is skewed to low complexity. A helical membrane pass occupies residues 119–150 (IFLVLLGLLMALVSWSMDYVSAKSLQAYKWSY). At 151-158 (YQMQPNLP) the chain is on the extracellular side. A helical membrane pass occupies residues 159-179 (LQYLVWVTFPLTLILFSAVFC). Residues 180-183 (HLIS) are Cytoplasmic-facing. The segment at residues 184–189 (PQAVGS) is an intramembrane region (note=Loop between two helices). Residues 188-192 (GSGIP) carry the Selectivity filter part_1 motif. Residue Ser189 participates in chloride binding. Positions 190-195 (GIPEMK) form an intramembrane region, helical. Residues 196–208 (TILRGVILKEYLT) lie on the Cytoplasmic side of the membrane. Positions 209–224 (LKAFVAKVVALTAGLG) form an intramembrane region, helical. The segment at residues 225–230 (SGIPVG) is an intramembrane region (note=Loop between two helices). The Selectivity filter part_2 signature appears at 230–234 (GKEGP). Residues 231–246 (KEGPFVHIASICAAVL) constitute an intramembrane region (helical). Residues 247-268 (SKFMSMFCGVYEQPYYYTDMLT) lie on the Cytoplasmic side of the membrane. Intramembrane regions (helical) lie at residues 269–280 (VGCAVGVGCCFG) and 281–290 (TPLGGVLFSI). Residues 291–301 (EVTSTYFAVRN) are Cytoplasmic-facing. Residues 302 to 321 (YWRGFFAATFSAFVFRVLAV) traverse the membrane as a helical segment. Over 322–347 (WNKDAVTITALFRTNFRMDFPFDLQE) the chain is Extracellular. A helical transmembrane segment spans residues 348–376 (LPAFAIIGICCGFLGAVFVYLHRQVMLGV). Residues 377 to 390 (RKHKALSQFLAKHR) lie on the Cytoplasmic side of the membrane. A helical transmembrane segment spans residues 391-408 (LLYPGIVTFIIASFTFPP). Residues 409–414 (GIGQFM) are Extracellular-facing. The note=Loop between two helices intramembrane region spans 415 to 418 (AGEL). Positions 419–426 (MPREAIST) form an intramembrane region, helical. The Extracellular segment spans residues 427–457 (LFDNNTWVKHVGDPESLGRSAVWIHPRVNVI). The helical intramembrane region spans 458–475 (IIIFLFFIMKFWMSIVAT). Residues 476–482 (TMPIPCG) constitute an intramembrane region (note=Loop between two helices). The short motif at 482-486 (GGFMP) is the Selectivity filter part_3 element. Residues 483–498 (GFMPVFVLGAAFGRLV) constitute an intramembrane region (helical). A chloride-binding site is contributed by Phe484. Residues 499 to 521 (GEIMAMLFPDGILFDDIIYKILP) are Extracellular-facing. An intramembrane region (helical) is located at residues 522 to 538 (GGYAVIGAAALTGAVSH). The segment at residues 539–540 (TV) is an intramembrane region (note=Loop between two helices). Positions 541-554 (STAVICFELTGQIA) form an intramembrane region, helical. The Extracellular segment spans residues 555–557 (HIL). Residues 558–571 (PMMVAVILANMVAQ) constitute an intramembrane region (helical). Positions 572–575 (SLQP) form an intramembrane region, note=Loop between two helices. Positions 576-578 (SLY) form an intramembrane region, helical. Tyr578 provides a ligand contact to chloride. Over 579–976 (DSIIQVKKLP…DEEDEDELIL (398 aa)) the chain is Cytoplasmic. The 60-residue stretch at 609–668 (MVRDVKFVSATCTYGELRTLLQTTTVKTLPLVDSKDSMILLGSVERSELQSLLQRHLGPE) folds into the CBS 1 domain. Positions 707 to 759 (DEDEDEDLSGKPELPPLPPPHPLPSAPLSSEESNGPLPSHKQQPEAPEPADQR) are disordered. Pro residues predominate over residues 719 to 731 (ELPPLPPPHPLPS). Positions 816–871 (IDQSPFQLVEQTSLHKTHTLFSLLGLHLAYVTSMGKLRGVLALEELQKAIEGHTKS) constitute a CBS 2 domain. Positions 872–976 (GVQLRPPLAS…DEEDEDELIL (105 aa)) are disordered. Residue Ser881 is modified to Phosphoserine. Over residues 914–925 (SPEPPAPSPSPA) the composition is skewed to pro residues. Acidic residues-rich tracts occupy residues 938–955 (ELEELELGESPGLEEELA) and 967–976 (DEEDEDELIL).

The protein belongs to the chloride channel (TC 2.A.49) family. ClC-1/CLCN1 subfamily. In terms of assembly, homodimer.

The protein resides in the cell membrane. It localises to the sarcolemma. Its subcellular location is the T-tubule. It catalyses the reaction chloride(in) = chloride(out). The catalysed reaction is thiocyanate(in) = thiocyanate(out). It carries out the reaction bromide(in) = bromide(out). The enzyme catalyses nitrate(in) = nitrate(out). It catalyses the reaction iodide(out) = iodide(in). Its activity is regulated as follows. Modulated by membrane voltage with depolarization favouring channel opening and hyperpolarization favouring channel closure. Inhibited by acidic pH and ATP binding due to a shift of voltage dependence of common gating to more positive voltages. Inhibited by 9-anthracene-carboxylic. In terms of biological role, voltage-gated chloride channel involved in skeletal muscle excitability. Generates most of the plasma membrane chloride conductance in skeletal muscle fibers, stabilizes the resting membrane potential and contributes to the repolarization phase during action potential firing. Forms a homodimeric channel where each subunit has its own ion conduction pathway. Conducts double-barreled currents controlled by two types of gates, two fast glutamate gates that control each subunit independently and a slow common gate that opens and shuts off both subunits simultaneously. Has a significant open probability at muscle resting potential and is further activated upon membrane depolarization. Permeable to small monovalent anions with ion selectivity for chloride &gt; thiocyanate &gt; bromide &gt; nitrate &gt; iodide. The polypeptide is Chloride channel protein 1 (CLCN1) (Canis lupus familiaris (Dog)).